A 139-amino-acid chain; its full sequence is MTVIDANGLIMGRLASNVAKMLLSGEEVSIVNAERAVISGSKVTTFEEYDVIRNMGTREFGPYFPRRPDRILKRTVRGMLPYKRARGKDAMGRLKVYVGIPYEYQDAEFVSVEGAEMTRLSSNKYVTIGDVSRQLGSKF.

The protein belongs to the universal ribosomal protein uL13 family. As to quaternary structure, part of the 50S ribosomal subunit.

Its function is as follows. This protein is one of the early assembly proteins of the 50S ribosomal subunit, although it is not seen to bind rRNA by itself. It is important during the early stages of 50S assembly. In Methanococcoides burtonii (strain DSM 6242 / NBRC 107633 / OCM 468 / ACE-M), this protein is Large ribosomal subunit protein uL13.